The primary structure comprises 176 residues: Isopentenyl-diphosphate Delta-isomerase 1 (176 aa).

The Mn(2+) site is built by His23 and His30. In terms of domain architecture, Nudix hydrolase spans 28 to 162; it reads HLHRAFSCFI…EEFCTPWFKK (135 aa). Cys65 is an active-site residue. Cys65 is a Mg(2+) binding site. His67 contributes to the Mn(2+) binding site. Glu85 serves as a coordination point for Mg(2+). Mn(2+) is bound by residues Glu112 and Glu114. Residue Glu114 is part of the active site.

Belongs to the IPP isomerase type 1 family. In terms of assembly, homodimer. Mg(2+) is required as a cofactor. It depends on Mn(2+) as a cofactor.

It localises to the cytoplasm. The catalysed reaction is isopentenyl diphosphate = dimethylallyl diphosphate. It functions in the pathway isoprenoid biosynthesis; dimethylallyl diphosphate biosynthesis; dimethylallyl diphosphate from isopentenyl diphosphate: step 1/1. Its function is as follows. Catalyzes the 1,3-allylic rearrangement of the homoallylic substrate isopentenyl (IPP) to its highly electrophilic allylic isomer, dimethylallyl diphosphate (DMAPP). The sequence is that of Isopentenyl-diphosphate Delta-isomerase 1 from Photorhabdus laumondii subsp. laumondii (strain DSM 15139 / CIP 105565 / TT01) (Photorhabdus luminescens subsp. laumondii).